Reading from the N-terminus, the 366-residue chain is Putative amino-acid transporter MJ1196 (366 aa).

The next 11 helical transmembrane spans lie at 14–34 (ITSI…LLFG), 37–57 (IIWG…PFAY), 87–107 (ILWL…EIVF), 111–131 (FNVS…ILGG), 141–161 (IFGI…GIKI), 173–193 (ILTI…TMPL), 205–225 (GLLV…LTIV), 247–267 (FLLA…LFTL), 291–311 (IPYY…IFDA), 314–334 (LVDM…LAVF), and 346–366 (LISM…FIIL).

Belongs to the amino acid-polyamine-organocation (APC) superfamily.

It is found in the cell membrane. In Methanocaldococcus jannaschii (strain ATCC 43067 / DSM 2661 / JAL-1 / JCM 10045 / NBRC 100440) (Methanococcus jannaschii), this protein is Putative amino-acid transporter MJ1196.